A 341-amino-acid polypeptide reads, in one-letter code: S-adenosylmethionine:tRNA ribosyltransferase-isomerase (341 aa).

This sequence belongs to the QueA family. In terms of assembly, monomer.

It is found in the cytoplasm. It catalyses the reaction 7-aminomethyl-7-carbaguanosine(34) in tRNA + S-adenosyl-L-methionine = epoxyqueuosine(34) in tRNA + adenine + L-methionine + 2 H(+). The protein operates within tRNA modification; tRNA-queuosine biosynthesis. Transfers and isomerizes the ribose moiety from AdoMet to the 7-aminomethyl group of 7-deazaguanine (preQ1-tRNA) to give epoxyqueuosine (oQ-tRNA). This is S-adenosylmethionine:tRNA ribosyltransferase-isomerase from Clostridium beijerinckii (strain ATCC 51743 / NCIMB 8052) (Clostridium acetobutylicum).